Consider the following 968-residue polypeptide: AP2-associated protein kinase 1 (968 aa).

M1 bears the N-acetylmethionine mark. The segment covering 1–11 (MKKFFDSRREQ) has biased composition (basic and acidic residues). The tract at residues 1–25 (MKKFFDSRREQGGSGLGSGSSGGGG) is disordered. The span at 12–25 (GGSGLGSGSSGGGG) shows a compositional bias: gly residues. S14 carries the phosphoserine modification. The 270-residue stretch at 46-315 (VTVDEVLAEG…QVSFFSFKLL (270 aa)) folds into the Protein kinase domain. ATP is bound by residues 52–60 (LAEGGFAIV) and K74. The active-site Proton acceptor is D176. Y234 is modified (phosphotyrosine). S235 is subject to Phosphoserine. Disordered stretches follow at residues 327–485 (SPIP…AQAP) and 578–640 (IQPP…AGHR). 2 positions are modified to phosphothreonine: T354 and T389. R391 carries the post-translational modification Omega-N-methylarginine. A compositionally biased stretch (pro residues) spans 437-448 (QAPPAPQQPPSA). Low complexity-rich tracts occupy residues 449–472 (PAQG…LKQQ) and 578–589 (IQPPQAQPATAS). T613 bears the Phosphothreonine mark. S625 carries the phosphoserine modification. At T627 the chain carries Phosphothreonine. Residues S630, S631, S644, and S657 each carry the phosphoserine modification. Phosphothreonine is present on T660. The tract at residues 671-708 (SLNKSKSATTTPSGSPRASQQNVYNPSEGSTWNPFDDD) is disordered. The span at 679-703 (TTTPSGSPRASQQNVYNPSEGSTWN) shows a compositional bias: polar residues. Y694 carries the phosphotyrosine modification. Residues S738, S853, S944, and S945 each carry the phosphoserine modification. The interval 830 to 967 (EKADVAVESL…SLLLVDQLID (138 aa)) is clathrin-binding domain (CBD). 2 disordered regions span residues 843-862 (LEPP…ASNR) and 929-952 (PVLI…ESSL). Over residues 851–862 (LPSQTESVASNR) the composition is skewed to polar residues. Over residues 938–951 (GGHSRNSSGSSESS) the composition is skewed to low complexity.

The protein belongs to the protein kinase superfamily. Ser/Thr protein kinase family. Interacts (via CBD domain) with clathrin. Interacts with AP-2 complex. Interacts with NUMB. Interacts with alpha-adaptin. Interacts with EPS15. Interacts with membrane-bound activated NOTCH1 but not with the inactive full-length form of NOTCH1. Preferentially interacts with monoubiquitinated activated NOTCH1 compared to the non-ubiquitinated form. Autophosphorylated.

Its subcellular location is the cell membrane. It localises to the membrane. It is found in the clathrin-coated pit. The protein resides in the presynapse. It carries out the reaction L-seryl-[protein] + ATP = O-phospho-L-seryl-[protein] + ADP + H(+). The catalysed reaction is L-threonyl-[protein] + ATP = O-phospho-L-threonyl-[protein] + ADP + H(+). With respect to regulation, stimulated by clathrin. Regulates clathrin-mediated endocytosis by phosphorylating the AP2M1/mu2 subunit of the adaptor protein complex 2 (AP-2) which ensures high affinity binding of AP-2 to cargo membrane proteins during the initial stages of endocytosis. Preferentially, may phosphorylate substrates on threonine residues. Regulates phosphorylation of other AP-2 subunits as well as AP-2 localization and AP-2-mediated internalization of ligand complexes. Phosphorylates NUMB and regulates its cellular localization, promoting NUMB localization to endosomes. Binds to and stabilizes the activated form of NOTCH1, increases its localization in endosomes and regulates its transcriptional activity. In Sus scrofa (Pig), this protein is AP2-associated protein kinase 1 (AAK1).